The following is a 356-amino-acid chain: GTPase Obg (356 aa).

The region spanning 1 to 158 (MFIDSVKITL…RLVRLELKLI (158 aa)) is the Obg domain. An OBG-type G domain is found at 159 to 339 (ADVGLVGFPN…LKFMLLEEIK (181 aa)). Residues 165–172 (GFPNVGKS), 190–194 (FTTLT), 212–215 (DIPG), 280–283 (SKSD), and 320–322 (SSL) each bind GTP. Mg(2+)-binding residues include serine 172 and threonine 192.

The protein belongs to the TRAFAC class OBG-HflX-like GTPase superfamily. OBG GTPase family. In terms of assembly, monomer. Mg(2+) serves as cofactor.

The protein resides in the cytoplasm. In terms of biological role, an essential GTPase which binds GTP, GDP and possibly (p)ppGpp with moderate affinity, with high nucleotide exchange rates and a fairly low GTP hydrolysis rate. Plays a role in control of the cell cycle, stress response, ribosome biogenesis and in those bacteria that undergo differentiation, in morphogenesis control. This Campylobacter jejuni subsp. jejuni serotype O:23/36 (strain 81-176) protein is GTPase Obg.